Reading from the N-terminus, the 561-residue chain is Nucleoprotein (561 aa).

A binding site for the cap structure m7GTP region spans residues 53–237 (MRKDKRSEAD…ITQEPAQINI (185 aa)). The Mn(2+) site is built by Asp380 and Glu382. Zn(2+)-binding residues include Glu390, Cys497, His500, and Cys521. Position 525 (Asp525) interacts with Mn(2+).

The protein belongs to the arenaviridae nucleocapsid protein family. In terms of assembly, homomultimerizes to form the nucleocapsid. Binds to viral genomic RNA. Interacts with glycoprotein G2. Interacts with protein Z; this interaction probably directs the encapsidated genome to budding sites. Interacts with protein L; this interaction does not interfere with Z-L interaction. Interacts with host IKBKE (via Protein kinase domain); the interaction inhibits IKBKE kinase activity.

Its subcellular location is the virion. It localises to the host cytoplasm. In terms of biological role, encapsidates the genome, protecting it from nucleases. The encapsidated genomic RNA is termed the nucleocapsid (NC). Serves as template for viral transcription and replication. The increased presence of protein N in host cell does not seem to trigger the switch from transcription to replication as observed in other negative strain RNA viruses. Through the interaction with host IKBKE, strongly inhibits the phosphorylation and nuclear translocation of host IRF3, a protein involved in interferon activation pathway, leading to the inhibition of interferon-beta and IRF3-dependent promoters activation. Also encodes a functional 3'-5' exoribonuclease that degrades preferentially dsRNA substrates and thereby participates in the suppression of interferon induction. The chain is Nucleoprotein from Allpahuayo mammarenavirus (isolate Rat/Peru/CLHP-2472/1997) (ALLV).